Reading from the N-terminus, the 355-residue chain is 3-dehydroquinate synthase (355 aa).

Residues 98–102, 122–123, lysine 135, lysine 144, and 162–165 contribute to the NAD(+) site; these read GVVGD, TT, and TLDT. Glutamate 177, histidine 240, and histidine 257 together coordinate Zn(2+).

The protein belongs to the sugar phosphate cyclases superfamily. Dehydroquinate synthase family. Co(2+) is required as a cofactor. Zn(2+) serves as cofactor. The cofactor is NAD(+).

It is found in the cytoplasm. It carries out the reaction 7-phospho-2-dehydro-3-deoxy-D-arabino-heptonate = 3-dehydroquinate + phosphate. Its pathway is metabolic intermediate biosynthesis; chorismate biosynthesis; chorismate from D-erythrose 4-phosphate and phosphoenolpyruvate: step 2/7. Its function is as follows. Catalyzes the conversion of 3-deoxy-D-arabino-heptulosonate 7-phosphate (DAHP) to dehydroquinate (DHQ). The sequence is that of 3-dehydroquinate synthase from Dictyoglomus turgidum (strain DSM 6724 / Z-1310).